Consider the following 357-residue polypeptide: Dual-specificity RNA methyltransferase RlmN (357 aa).

The active-site Proton acceptor is Glu-89. Positions 109–340 (EREKYTVCVS…CTIRESKALD (232 aa)) constitute a Radical SAM core domain. A disulfide bridge connects residues Cys-116 and Cys-345. [4Fe-4S] cluster-binding residues include Cys-123, Cys-127, and Cys-130. S-adenosyl-L-methionine contacts are provided by residues 173–174 (GE), Ser-203, 226–228 (SLH), and Asn-302. Cys-345 (S-methylcysteine intermediate) is an active-site residue.

The protein belongs to the radical SAM superfamily. RlmN family. [4Fe-4S] cluster serves as cofactor.

The protein localises to the cytoplasm. It catalyses the reaction adenosine(2503) in 23S rRNA + 2 reduced [2Fe-2S]-[ferredoxin] + 2 S-adenosyl-L-methionine = 2-methyladenosine(2503) in 23S rRNA + 5'-deoxyadenosine + L-methionine + 2 oxidized [2Fe-2S]-[ferredoxin] + S-adenosyl-L-homocysteine. The catalysed reaction is adenosine(37) in tRNA + 2 reduced [2Fe-2S]-[ferredoxin] + 2 S-adenosyl-L-methionine = 2-methyladenosine(37) in tRNA + 5'-deoxyadenosine + L-methionine + 2 oxidized [2Fe-2S]-[ferredoxin] + S-adenosyl-L-homocysteine. Functionally, specifically methylates position 2 of adenine 2503 in 23S rRNA and position 2 of adenine 37 in tRNAs. m2A2503 modification seems to play a crucial role in the proofreading step occurring at the peptidyl transferase center and thus would serve to optimize ribosomal fidelity. The protein is Dual-specificity RNA methyltransferase RlmN of Helicobacter pylori (strain ATCC 700392 / 26695) (Campylobacter pylori).